Consider the following 121-residue polypeptide: Large ribosomal subunit protein bL12 (121 aa).

This sequence belongs to the bacterial ribosomal protein bL12 family. Homodimer. Part of the ribosomal stalk of the 50S ribosomal subunit. Forms a multimeric L10(L12)X complex, where L10 forms an elongated spine to which 2 to 4 L12 dimers bind in a sequential fashion. Binds GTP-bound translation factors.

Forms part of the ribosomal stalk which helps the ribosome interact with GTP-bound translation factors. Is thus essential for accurate translation. This is Large ribosomal subunit protein bL12 from Leuconostoc citreum (strain KM20).